The sequence spans 495 residues: Tubulin epsilon and delta complex protein 1 (495 aa).

Residues Gly355–Ala387 adopt a coiled-coil conformation. The interval Cys417 to Ala440 is disordered. The stretch at Ile452 to Leu480 forms a coiled coil.

In terms of assembly, interacts with TEDC2. Found in a complex with TEDC1, TEDC2, TUBE1 and TUBD1.

The protein localises to the cell projection. Its subcellular location is the cilium. It is found in the cytoplasm. It localises to the cytoskeleton. The protein resides in the microtubule organizing center. The protein localises to the centrosome. Its subcellular location is the centriole. Its function is as follows. Acts as a positive regulator of ciliary hedgehog signaling. Required for centriole stability. May play a role in counteracting perturbation of actin filaments, such as after treatment with the actin depolymerizing microbial metabolite Chivosazole F. The protein is Tubulin epsilon and delta complex protein 1 of Homo sapiens (Human).